Reading from the N-terminus, the 256-residue chain is H-2 class II histocompatibility antigen, A-K alpha chain (256 aa).

A signal peptide spans 1–23 (MPRSRALILGVLALTTMLSLCGG). Residues 24–111 (EDDIEADHVG…KRSNSTPATN (88 aa)) form an alpha-1 region. Residues 24 to 218 (EDDIEADHVG…IPAPMSELTE (195 aa)) are Extracellular-facing. N-linked (GlcNAc...) asparagine glycans are attached at residues asparagine 105 and asparagine 145. Positions 112-205 (EAPQATVFPK…GLEEPVLKHW (94 aa)) are alpha-2. The Ig-like C1-type domain occupies 114 to 206 (PQATVFPKSP…LEEPVLKHWE (93 aa)). Cysteine 134 and cysteine 190 are joined by a disulfide. Residues 206 to 218 (EPEIPAPMSELTE) are connecting peptide. The helical transmembrane segment at 219–241 (TVVCALGLSVGLVGIVVGTIFII) threads the bilayer. The Cytoplasmic portion of the chain corresponds to 242–256 (QGLRSGGTSRHPGPL).

This sequence belongs to the MHC class II family.

Its subcellular location is the membrane. In Mus musculus (Mouse), this protein is H-2 class II histocompatibility antigen, A-K alpha chain (H2-Aa).